The primary structure comprises 218 residues: Large ribosomal subunit protein bL25 (218 aa).

2 disordered regions span residues 1–20 (MKTH…GPAR) and 185–218 (PTAA…ASEE). The span at 192-218 (EEGEEGEEGEEGGEGGEAEGAEAASEE) shows a compositional bias: acidic residues.

It belongs to the bacterial ribosomal protein bL25 family. CTC subfamily. As to quaternary structure, part of the 50S ribosomal subunit; part of the 5S rRNA/L5/L18/L25 subcomplex. Contacts the 5S rRNA. Binds to the 5S rRNA independently of L5 and L18.

Functionally, this is one of the proteins that binds to the 5S RNA in the ribosome where it forms part of the central protuberance. The sequence is that of Large ribosomal subunit protein bL25 from Desulfatibacillum aliphaticivorans.